A 185-amino-acid polypeptide reads, in one-letter code: Uroplakin-2 (185 aa).

Positions 1-26 are cleaved as a signal peptide; the sequence is MASPWPVWTLSWILILLAVLVPGAAA. A propeptide spanning residues 27-85 is cleaved from the precursor; it reads DFNISSLSGLLSPVMTESLLVALPPCHLTGGNATLTVRRANDSKVVRSSFVVPPCRGRR. N-linked (GlcNAc...) asparagine glycosylation is found at Asn-29, Asn-58, and Asn-67. Residues 86 to 156 lie on the Lumenal side of the membrane; sequence ELVSVVDSGS…IGLAMARTGG (71 aa). A helical membrane pass occupies residues 157–177; the sequence is MVVITVLLSVAMFLLVLGLII. The Cytoplasmic segment spans residues 178–185; that stretch reads ALALGARK.

Belongs to the uroplakin-2 family. Interacts with uroplakin-1a (UPK1A). Bladder epithelium.

It is found in the cell membrane. Its function is as follows. Component of the asymmetric unit membrane (AUM); a highly specialized biomembrane elaborated by terminally differentiated urothelial cells. May play an important role in regulating the assembly of the AUM. This is Uroplakin-2 (UPK2) from Bos taurus (Bovine).